We begin with the raw amino-acid sequence, 818 residues long: G-type lectin S-receptor-like serine/threonine-protein kinase At1g67520 (818 aa).

Residues 1–22 (MCSNGIFVSLLTLSLLLGKSCS) form the signal peptide. The Extracellular portion of the chain corresponds to 23–387 (ETDTLHQGQF…NENKKVAAWH (365 aa)). Positions 24–149 (TDTLHQGQFL…DADGSMKRVL (126 aa)) constitute a Bulb-type lectin domain. Asn-123, Asn-199, and Asn-337 each carry an N-linked (GlcNAc...) asparagine glycan. Residues 290–379 (CLAAGYVVRD…PRTIYIRGNE (90 aa)) enclose the PAN domain. Cystine bridges form between Cys-330-Cys-353 and Cys-334-Cys-340. The helical transmembrane segment at 388-408 (IVVATLFLMTPIIWFIIYLVL) threads the bilayer. At 409-818 (RKFNVKGRNC…SITITVLEAR (410 aa)) the chain is on the cytoplasmic side. The Protein kinase domain occupies 496–785 (FSDENKLGEG…ALSLPKEPAF (290 aa)). Residues 502-510 (LGEGGFGPV) and Lys-524 contribute to the ATP site. Residue Ser-530 is modified to Phosphoserine. The segment at 585 to 602 (LRKNVLDWTLRFRIMEGI) is caM-binding. The Proton acceptor role is filled by Asp-621. Phosphoserine occurs at positions 625 and 638. Thr-655 carries the phosphothreonine modification. A phosphoserine mark is found at Ser-699 and Ser-807. The residue at position 813 (Thr-813) is a Phosphothreonine.

It belongs to the protein kinase superfamily. Ser/Thr protein kinase family.

It localises to the cell membrane. The enzyme catalyses L-seryl-[protein] + ATP = O-phospho-L-seryl-[protein] + ADP + H(+). The catalysed reaction is L-threonyl-[protein] + ATP = O-phospho-L-threonyl-[protein] + ADP + H(+). In Arabidopsis thaliana (Mouse-ear cress), this protein is G-type lectin S-receptor-like serine/threonine-protein kinase At1g67520.